Here is a 1616-residue protein sequence, read N- to C-terminus: Helicase SWR1 (1616 aa).

Residues 1 to 10 (MARGGSRRRN) show a composition bias toward basic residues. 2 disordered regions span residues 1–53 (MARG…IKKE) and 185–238 (KTLE…SDMD). The segment covering 11–26 (TSVISTQKIEPSNEST) has biased composition (polar residues). Low complexity predominate over residues 200–209 (PSKTSKGNQK). Residues 396-468 (IPKTQGVTIH…KEQNLKRISK (73 aa)) form the HSA domain. Disordered regions lie at residues 521–565 (NKSS…VNMD), 583–614 (IDQS…DANK), and 645–774 (LIEK…VPLP). The span at 529–538 (EVDTENENET) shows a compositional bias: acidic residues. The segment covering 645–654 (LIEKFSKEDE) has biased composition (basic and acidic residues). The segment covering 705-737 (TEDEEDSNDDVSADSDGNVSDDENMSTTDEEDE) has biased composition (acidic residues). Over residues 738–751 (PKTPKSSEDPKMDE) the composition is skewed to basic and acidic residues. A compositionally biased stretch (acidic residues) spans 752–763 (KENESDVLEEEV). A Helicase ATP-binding domain is found at 793 to 958 (ASLYNNGTNG…WSLLYFLMPS (166 aa)). 806-813 (DEMGLGKT) provides a ligand contact to ATP. The DEAH box motif lies at 909–912 (DEAH). Residues 992-1013 (NGTSSDVIDENDKTTQRMDEET) form a disordered region. Positions 1001-1013 (ENDKTTQRMDEET) are enriched in basic and acidic residues. A Helicase C-terminal domain is found at 1333-1486 (KLQKLATLLQ…NVVIQEGEFT (154 aa)). Positions 1545–1576 (DDEDFDEESKAATNTATPSQTPGPDTAGSGIV) are disordered. Polar residues predominate over residues 1555–1567 (AATNTATPSQTPG).

Belongs to the SNF2/RAD54 helicase family. SWR1 subfamily. In terms of assembly, component of the SWR1 chromatin-remodeling complex.

It is found in the nucleus. The enzyme catalyses ATP + H2O = ADP + phosphate + H(+). In terms of biological role, catalytic component of the SWR1 complex which mediates the ATP-dependent exchange of histone H2A for the H2A variant HZT1 leading to transcriptional regulation of selected genes by chromatin remodeling. The sequence is that of Helicase SWR1 (SWR1) from Debaryomyces hansenii (strain ATCC 36239 / CBS 767 / BCRC 21394 / JCM 1990 / NBRC 0083 / IGC 2968) (Yeast).